Consider the following 426-residue polypeptide: Enolase (426 aa).

Gln-163 contacts (2R)-2-phosphoglycerate. Glu-205 acts as the Proton donor in catalysis. Mg(2+) is bound by residues Asp-242, Glu-285, and Asp-312. (2R)-2-phosphoglycerate is bound by residues Lys-337, Arg-366, Ser-367, and Lys-388. Lys-337 acts as the Proton acceptor in catalysis.

This sequence belongs to the enolase family. Requires Mg(2+) as cofactor.

It localises to the cytoplasm. It is found in the secreted. Its subcellular location is the cell surface. It carries out the reaction (2R)-2-phosphoglycerate = phosphoenolpyruvate + H2O. The protein operates within carbohydrate degradation; glycolysis; pyruvate from D-glyceraldehyde 3-phosphate: step 4/5. Its function is as follows. Catalyzes the reversible conversion of 2-phosphoglycerate (2-PG) into phosphoenolpyruvate (PEP). It is essential for the degradation of carbohydrates via glycolysis. In Nitrobacter winogradskyi (strain ATCC 25391 / DSM 10237 / CIP 104748 / NCIMB 11846 / Nb-255), this protein is Enolase.